A 499-amino-acid polypeptide reads, in one-letter code: Cobyric acid synthase (499 aa).

The region spanning 251 to 442 is the GATase cobBQ-type domain; it reads SLDIAVVSLK…LHGVFDNLEW (192 aa). Residue Cys-332 is the Nucleophile of the active site. His-434 is a catalytic residue.

Belongs to the CobB/CobQ family. CobQ subfamily.

Its pathway is cofactor biosynthesis; adenosylcobalamin biosynthesis. Catalyzes amidations at positions B, D, E, and G on adenosylcobyrinic A,C-diamide. NH(2) groups are provided by glutamine, and one molecule of ATP is hydrogenolyzed for each amidation. This chain is Cobyric acid synthase, found in Streptococcus sanguinis (strain SK36).